Reading from the N-terminus, the 44-residue chain is Protein PsbN (44 aa).

Residues 6–26 traverse the membrane as a helical segment; sequence FFFTIFVWFLLISVTGYSIYV.

The protein belongs to the PsbN family.

The protein resides in the plastid. It localises to the chloroplast thylakoid membrane. In terms of biological role, may play a role in photosystem I and II biogenesis. This Bigelowiella natans (Pedinomonas minutissima) protein is Protein PsbN.